The chain runs to 347 residues: Dual specificity mitogen-activated protein kinase kinase 3 (347 aa).

An N-acetylmethionine modification is found at Met1. A compositionally biased stretch (pro residues) spans 1 to 11 (MESPAASPPAS). The disordered stretch occupies residues 1 to 45 (MESPAASPPASLPQTKGKSKRKKDLRISCVSKPPVSNPTPPRNLD). Residue Ser3 is modified to Phosphoserine. A Protein kinase domain is found at 64–325 (LVTISELGRG…YLELMEHPFF (262 aa)). Residues 70–78 (LGRGAYGVV) and Lys93 each bind ATP. Residue Asp190 is the Proton acceptor of the active site. Position 218 is a phosphoserine (Ser218). Thr222 carries the phosphothreonine modification.

The protein belongs to the protein kinase superfamily. STE Ser/Thr protein kinase family. MAP kinase kinase subfamily. In terms of assembly, component of a signaling complex containing at least AKAP13, PKN1, MAPK14, ZAK and MAP2K3. Within this complex, AKAP13 interacts directly with PKN1, which in turn recruits MAPK14, MAP2K3 and ZAK. Binds to DYRK1B/MIRK and increases its kinase activity. Part of a complex with MAP3K3, RAC1 and CCM2. Interacts with ARRB1. In terms of processing, autophosphorylated. Phosphorylation on Ser-218 and Thr-222 by MAP kinase kinase kinases positively regulates the kinase activity. Phosphorylated by TAOK2.

It catalyses the reaction L-seryl-[protein] + ATP = O-phospho-L-seryl-[protein] + ADP + H(+). The enzyme catalyses L-threonyl-[protein] + ATP = O-phospho-L-threonyl-[protein] + ADP + H(+). The catalysed reaction is L-tyrosyl-[protein] + ATP = O-phospho-L-tyrosyl-[protein] + ADP + H(+). Activated by dual phosphorylation on Ser-218 and Thr-222. Dual specificity kinase. Is activated by cytokines and environmental stress in vivo. Catalyzes the concomitant phosphorylation of a threonine and a tyrosine residue in the MAP kinase p38. Part of a signaling cascade that begins with the activation of the adrenergic receptor ADRA1B and leads to the activation of MAPK14. The chain is Dual specificity mitogen-activated protein kinase kinase 3 (Map2k3) from Mus musculus (Mouse).